Reading from the N-terminus, the 308-residue chain is Ribonuclease Z (308 aa).

Residues His63, His65, Asp67, His68, His141, Asp212, and His270 each contribute to the Zn(2+) site. Asp67 acts as the Proton acceptor in catalysis.

This sequence belongs to the RNase Z family. Homodimer. Zn(2+) serves as cofactor.

It carries out the reaction Endonucleolytic cleavage of RNA, removing extra 3' nucleotides from tRNA precursor, generating 3' termini of tRNAs. A 3'-hydroxy group is left at the tRNA terminus and a 5'-phosphoryl group is left at the trailer molecule.. Functionally, zinc phosphodiesterase, which displays some tRNA 3'-processing endonuclease activity. Probably involved in tRNA maturation, by removing a 3'-trailer from precursor tRNA. This is Ribonuclease Z from Pediococcus pentosaceus (strain ATCC 25745 / CCUG 21536 / LMG 10740 / 183-1w).